The chain runs to 358 residues: 3-dehydroquinate synthase (358 aa).

NAD(+) contacts are provided by residues 70-75 (DGEQFK), 104-108 (GVIGD), 128-129 (TT), K141, K150, and 168-171 (CLHT). Zn(2+) is bound by residues E183, H246, and H263.

This sequence belongs to the sugar phosphate cyclases superfamily. Dehydroquinate synthase family. Requires Co(2+) as cofactor. Zn(2+) is required as a cofactor. The cofactor is NAD(+).

The protein resides in the cytoplasm. It catalyses the reaction 7-phospho-2-dehydro-3-deoxy-D-arabino-heptonate = 3-dehydroquinate + phosphate. It functions in the pathway metabolic intermediate biosynthesis; chorismate biosynthesis; chorismate from D-erythrose 4-phosphate and phosphoenolpyruvate: step 2/7. Catalyzes the conversion of 3-deoxy-D-arabino-heptulosonate 7-phosphate (DAHP) to dehydroquinate (DHQ). This Shewanella baltica (strain OS185) protein is 3-dehydroquinate synthase.